Consider the following 356-residue polypeptide: 3'-5' exonuclease (356 aa).

The tract at residues 1-120 (MDKYLIKMPT…TPSPEKEKPE (120 aa)) is disordered. 2 stretches are compositionally biased toward basic and acidic residues: residues 29 to 56 (TIDKQKEKNTPTEKQKQEDDYVEKENTP) and 71 to 85 (KNQDTPTEVKDIKNE). Over residues 99 to 113 (LTRSTRSMAEEGTPS) the composition is skewed to low complexity. A phosphoserine mark is found at Ser105 and Ser113. The 3'-5' exonuclease domain occupies 155–316 (TTLDVVPMAF…GQVIYRDLEQ (162 aa)). Asp165, Glu167, and Asp303 together coordinate Mg(2+).

It belongs to the WRNexo family.

Its subcellular location is the nucleus. Its function is as follows. Has exonuclease activity on both single-stranded and duplex templates bearing overhangs, but not blunt ended duplex DNA, and cleaves in a 3'-5' direction. Essential for the formation of DNA replication focal centers. Has an important role in maintaining genome stability. The polypeptide is 3'-5' exonuclease (Drosophila willistoni (Fruit fly)).